The chain runs to 256 residues: 5'-nucleotidase SurE (256 aa).

A divalent metal cation-binding residues include Asp8, Asp9, Ser40, and Asn92.

Belongs to the SurE nucleotidase family. It depends on a divalent metal cation as a cofactor.

It localises to the cytoplasm. It catalyses the reaction a ribonucleoside 5'-phosphate + H2O = a ribonucleoside + phosphate. In terms of biological role, nucleotidase that shows phosphatase activity on nucleoside 5'-monophosphates. In Allorhizobium ampelinum (strain ATCC BAA-846 / DSM 112012 / S4) (Agrobacterium vitis (strain S4)), this protein is 5'-nucleotidase SurE.